Here is a 237-residue protein sequence, read N- to C-terminus: Ribosomal RNA small subunit methyltransferase G (237 aa).

S-adenosyl-L-methionine is bound by residues Gly-78, Phe-83, Ala-129–Glu-130, and Arg-148.

The protein belongs to the methyltransferase superfamily. RNA methyltransferase RsmG family.

The protein resides in the cytoplasm. In terms of biological role, specifically methylates the N7 position of a guanine in 16S rRNA. In Streptococcus pyogenes serotype M49 (strain NZ131), this protein is Ribosomal RNA small subunit methyltransferase G.